Reading from the N-terminus, the 127-residue chain is Large ribosomal subunit protein bL17 (127 aa).

This sequence belongs to the bacterial ribosomal protein bL17 family. In terms of assembly, part of the 50S ribosomal subunit. Contacts protein L32.

The protein is Large ribosomal subunit protein bL17 of Photobacterium profundum (strain SS9).